Here is a 207-residue protein sequence, read N- to C-terminus: Outer-membrane lipoprotein carrier protein (207 aa).

Positions 1-21 (MRAIRMLLVSALTLGSVTAYA) are cleaved as a signal peptide.

Belongs to the LolA family. As to quaternary structure, monomer.

The protein localises to the periplasm. Functionally, participates in the translocation of lipoproteins from the inner membrane to the outer membrane. Only forms a complex with a lipoprotein if the residue after the N-terminal Cys is not an aspartate (The Asp acts as a targeting signal to indicate that the lipoprotein should stay in the inner membrane). This is Outer-membrane lipoprotein carrier protein from Pseudomonas putida (strain ATCC 47054 / DSM 6125 / CFBP 8728 / NCIMB 11950 / KT2440).